The chain runs to 236 residues: MLSKGLKRKREEEEEKEPLAVDSWWLDPGHTAVAQAPPAVASSSLFDLSVLKLHHSLQQSEPDLRHLVLVVNTLRRIQASMAPAAALPPVPSPPAAPSVADNLLASSDAALSASMASLLEDLSHIEGLSQAPQPLADEGPPGRSIGGAAPSLGALDLLGPATGCLLDDGLEGLFEDIDTSMYDNELWAPASEGLKPGPEDGPGKEEAPELDEAELDYLMDVLVGTQALERPPGPGR.

The disordered stretch occupies residues 1 to 20; sequence MLSKGLKRKREEEEEKEPLA. Residues 38 to 85 enclose the SERTA domain; the sequence is PAVASSSLFDLSVLKLHHSLQQSEPDLRHLVLVVNTLRRIQASMAPAA. The tract at residues 189–211 is disordered; the sequence is PASEGLKPGPEDGPGKEEAPELD. A compositionally biased stretch (basic and acidic residues) spans 197–207; that stretch reads GPEDGPGKEEA.

Interacts with the PHD-bromodomain of TIF1, TRIM28/TIF1B and p300/CBP. Interacts with E2F1 and TFDP1; modulates transactivation activity of TFDP1/E2F complexes. Also interacts with CDK4. In terms of processing, polyubiquitinated, which promotes proteasomal degradation.

Its function is as follows. Acts at E2F-responsive promoters as coregulator to integrate signals provided by PHD- and/or bromodomain-containing transcription factors. Stimulates E2F1/TFDP1 transcriptional activity. Renders the activity of cyclin D1/CDK4 resistant to the inhibitory effects of CDKN2A/p16INK4A. The sequence is that of SERTA domain-containing protein 1 (SERTAD1) from Homo sapiens (Human).